Here is a 327-residue protein sequence, read N- to C-terminus: GMP reductase (327 aa).

Cys-176 (thioimidate intermediate) is an active-site residue. 205–228 (IIADGGIRTHGDIAKSIRFGASMV) lines the NADP(+) pocket.

It belongs to the IMPDH/GMPR family. GuaC type 2 subfamily.

The enzyme catalyses IMP + NH4(+) + NADP(+) = GMP + NADPH + 2 H(+). Catalyzes the irreversible NADPH-dependent deamination of GMP to IMP. It functions in the conversion of nucleobase, nucleoside and nucleotide derivatives of G to A nucleotides, and in maintaining the intracellular balance of A and G nucleotides. This Streptococcus pyogenes serotype M3 (strain ATCC BAA-595 / MGAS315) protein is GMP reductase.